The primary structure comprises 358 residues: E3 ubiquitin-protein ligase RNF146 (358 aa).

The RING-type zinc-finger motif lies at 36-74 (CAICLQTCVHPVSLPCKHVFCYLCVKGASWLGKRCALCR). Residues Lys84 and Lys94 each participate in a glycyl lysine isopeptide (Lys-Gly) (interchain with G-Cter in ubiquitin) cross-link. The 77-residue stretch at 91–167 (EELKAASRGN…EHGRRRKIKR (77 aa)) folds into the WWE domain. Positions 107, 110, and 114 each coordinate a glycoprotein. A Glycyl lysine isopeptide (Lys-Gly) (interchain with G-Cter in ubiquitin) cross-link involves residue Lys130. A glycoprotein contacts are provided by Tyr144, Gln153, Arg163, and Lys175. Residue Lys175 forms a Glycyl lysine isopeptide (Lys-Gly) (interchain with G-Cter in ubiquitin) linkage. Residues 253–358 (GDNTAERSHR…PDGQCTVTEV (106 aa)) form a disordered region. Over residues 283-297 (SIEETESDASSDSED) the composition is skewed to acidic residues. Phosphoserine occurs at positions 289 and 293. The segment covering 305–322 (HSLTQQRLLVSNANQTVP) has biased composition (polar residues).

As to quaternary structure, can form homooligomers. Interacts with PARsylated AXIN1, AXIN2, BLZF1, CASC3, H1-2, IPO7, LIG3, NCL, PARP1, XRCC1, XRCC5 and XRCC6. Interacts with DDB1, DHX15, IQGAP1, LRPPRC, PARP2, PRKDC, RUVBL2, TNKS1 and TNKS2. Binding often leads to interactor ubiquitination, in the presence of the appropriate E1 and E2 enzymes, and proteasomal degradation. Ubiquitinated; autoubiquitinated. Autoubiquitination is enhanced upon poly(ADP-ribose)-binding.

It localises to the cytoplasm. It is found in the cytosol. The protein resides in the nucleus. The enzyme catalyses S-ubiquitinyl-[E2 ubiquitin-conjugating enzyme]-L-cysteine + [acceptor protein]-L-lysine = [E2 ubiquitin-conjugating enzyme]-L-cysteine + N(6)-ubiquitinyl-[acceptor protein]-L-lysine.. It functions in the pathway protein modification; protein ubiquitination. In terms of biological role, E3 ubiquitin-protein ligase that specifically binds poly-ADP-ribosylated (PARsylated) proteins and mediates their ubiquitination and subsequent degradation. May regulate many important biological processes, such as cell survival and DNA damage response. Acts as an activator of the Wnt signaling pathway by mediating the ubiquitination of PARsylated AXIN1 and AXIN2, 2 key components of the beta-catenin destruction complex. Acts in cooperation with tankyrase proteins (TNKS and TNKS2), which mediate PARsylation of target proteins AXIN1, AXIN2, BLZF1, CASC3, TNKS and TNKS2. Recognizes and binds tankyrase-dependent PARsylated proteins via its WWE domain and mediates their ubiquitination, leading to their degradation. Different ubiquitin linkage types have been observed: TNKS2 undergoes ubiquitination at 'Lys-48' and 'Lys-63', while AXIN1 is only ubiquitinated at 'Lys-48'. May regulate TNKS and TNKS2 subcellular location, preventing aggregation at a centrosomal location. Neuroprotective protein. Protects the brain against N-methyl-D-aspartate (NMDA) receptor-mediated glutamate excitotoxicity and ischemia, by interfering with PAR-induced cell death, called parthanatos. Prevents nuclear translocation of AIFM1 in a PAR-binding dependent manner. Does not affect PARP1 activation. Protects against cell death induced by DNA damaging agents, such as N-methyl-N-nitro-N-nitrosoguanidine (MNNG) and rescues cells from G1 arrest. Promotes cell survival after gamma-irradiation. Facilitates DNA repair. The sequence is that of E3 ubiquitin-protein ligase RNF146 (RNF146) from Pongo abelii (Sumatran orangutan).